The following is a 244-amino-acid chain: 5-oxoprolinase subunit A (244 aa).

Belongs to the LamB/PxpA family. In terms of assembly, forms a complex composed of PxpA, PxpB and PxpC.

It catalyses the reaction 5-oxo-L-proline + ATP + 2 H2O = L-glutamate + ADP + phosphate + H(+). Its function is as follows. Catalyzes the cleavage of 5-oxoproline to form L-glutamate coupled to the hydrolysis of ATP to ADP and inorganic phosphate. The sequence is that of 5-oxoprolinase subunit A from Salmonella typhi.